The primary structure comprises 305 residues: Sulfate adenylyltransferase subunit 2 (305 aa).

The protein belongs to the PAPS reductase family. CysD subfamily. Heterodimer composed of CysD, the smaller subunit, and CysN.

It catalyses the reaction sulfate + ATP + H(+) = adenosine 5'-phosphosulfate + diphosphate. Its pathway is sulfur metabolism; hydrogen sulfide biosynthesis; sulfite from sulfate: step 1/3. In terms of biological role, with CysN forms the ATP sulfurylase (ATPS) that catalyzes the adenylation of sulfate producing adenosine 5'-phosphosulfate (APS) and diphosphate, the first enzymatic step in sulfur assimilation pathway. APS synthesis involves the formation of a high-energy phosphoric-sulfuric acid anhydride bond driven by GTP hydrolysis by CysN coupled to ATP hydrolysis by CysD. The polypeptide is Sulfate adenylyltransferase subunit 2 (Pseudomonas aeruginosa (strain LESB58)).